The chain runs to 279 residues: Glycerol uptake facilitator protein (279 aa).

The Cytoplasmic segment spans residues 1 to 8 (MTTAAPTP). The helical transmembrane segment at 9–37 (SLFGQCLAEFLGTALLIFFGTGCVAALKV) threads the bilayer. Residues 38–42 (AGASF) are Periplasmic-facing. The helical transmembrane segment at 43–63 (GLWEISIIWGVGVSMAIYLSA) threads the bilayer. Residues 64–66 (GVS) lie on the Cytoplasmic side of the membrane. Residues 67-70 (GAHL) lie within the membrane without spanning it. The NPA 1 signature appears at 71 to 73 (NPA). An intramembrane region (helical) is located at residues 71 to 81 (NPAVSIALWLF). Topologically, residues 82–87 (AGFEGR) are cytoplasmic. The chain crosses the membrane as a helical span at residues 88–111 (KLPFYITAQVAGAFCAAALVYTLY). Over 112–146 (SSLFIEFEQAQNIVRGSQDSLALASVFSTYPHPAL) the chain is Periplasmic. Residues 147 to 172 (SVGQAFLVEVVITAILMAVIMALTDD) traverse the membrane as a helical segment. Residues 173 to 180 (GNGLPRGP) are Cytoplasmic-facing. Residues 181–197 (LAPLLIGLLIAVIGSAM) traverse the membrane as a helical segment. Residues 198–201 (GPLT) lie on the Periplasmic side of the membrane. Residues 202–205 (GFAM) lie within the membrane without spanning it. The short motif at 206-208 (NPA) is the NPA 2 element. Positions 206 to 219 (NPARDFGPKLMTYL) form an intramembrane region, helical. At 220 to 234 (AGWGPIAFTGGREIP) the chain is on the periplasmic side. Residues 235–257 (YFLVPIFAPILGACLGAGGYRVL) form a helical membrane-spanning segment. The Cytoplasmic portion of the chain corresponds to 258-279 (IARHLPSAAAPAEAEPEKVRAS).

It belongs to the MIP/aquaporin (TC 1.A.8) family.

The protein resides in the cell inner membrane. It catalyses the reaction glycerol(in) = glycerol(out). Functionally, mediates glycerol diffusion across the cytoplasmic membrane via a pore-type mechanism. The polypeptide is Glycerol uptake facilitator protein (glpF) (Pseudomonas aeruginosa (strain ATCC 15692 / DSM 22644 / CIP 104116 / JCM 14847 / LMG 12228 / 1C / PRS 101 / PAO1)).